A 376-amino-acid chain; its full sequence is TelA-like protein SE_1089 (376 aa).

The protein belongs to the TelA family.

This is TelA-like protein SE_1089 from Staphylococcus epidermidis (strain ATCC 12228 / FDA PCI 1200).